A 75-amino-acid polypeptide reads, in one-letter code: MPQLSRYSDERVEELLTELASVLSKHKAPTDLSLMVLGNMVTNVINNSVAPAQRKTLARSFAEALQSSIRDDNAH.

It belongs to the UPF0352 family.

This Cronobacter sakazakii (strain ATCC BAA-894) (Enterobacter sakazakii) protein is UPF0352 protein ESA_01049.